The following is a 377-amino-acid chain: Putative F-box only protein 10 (377 aa).

Residues 1 to 46 (MVSVNLPWELVEEILYRVPPQSLARFRTVCKQWNSLFDDNKFVNDH) form the F-box domain.

The chain is Putative F-box only protein 10 (FBX10) from Arabidopsis thaliana (Mouse-ear cress).